The chain runs to 247 residues: ATP synthase subunit a, chloroplastic (247 aa).

Transmembrane regions (helical) follow at residues 38–58 (QVLITSWVVIAILLGSAAIAV), 95–115 (VPFIGTMFLFIFVSNWSGALL), 134–154 (INTTVALALLTSVAYFYAGLT), 199–219 (LVVVVLVSLVPLVVPIPVMFL), and 220–240 (GLFTSGIQALIFATLAAAYIG).

It belongs to the ATPase A chain family. In terms of assembly, F-type ATPases have 2 components, CF(1) - the catalytic core - and CF(0) - the membrane proton channel. CF(1) has five subunits: alpha(3), beta(3), gamma(1), delta(1), epsilon(1). CF(0) has four main subunits: a, b, b' and c.

Its subcellular location is the plastid. It is found in the chloroplast thylakoid membrane. Functionally, key component of the proton channel; it plays a direct role in the translocation of protons across the membrane. The sequence is that of ATP synthase subunit a, chloroplastic (atpI) from Spinacia oleracea (Spinach).